We begin with the raw amino-acid sequence, 337 residues long: Tetraacyldisaccharide 4'-kinase (337 aa).

51-58 contacts ATP; the sequence is HLGGAGKT.

This sequence belongs to the LpxK family.

The catalysed reaction is a lipid A disaccharide + ATP = a lipid IVA + ADP + H(+). The protein operates within glycolipid biosynthesis; lipid IV(A) biosynthesis; lipid IV(A) from (3R)-3-hydroxytetradecanoyl-[acyl-carrier-protein] and UDP-N-acetyl-alpha-D-glucosamine: step 6/6. In terms of biological role, transfers the gamma-phosphate of ATP to the 4'-position of a tetraacyldisaccharide 1-phosphate intermediate (termed DS-1-P) to form tetraacyldisaccharide 1,4'-bis-phosphate (lipid IVA). The polypeptide is Tetraacyldisaccharide 4'-kinase (Nitrobacter winogradskyi (strain ATCC 25391 / DSM 10237 / CIP 104748 / NCIMB 11846 / Nb-255)).